Reading from the N-terminus, the 125-residue chain is Small ribosomal subunit protein eS6 (125 aa).

Belongs to the eukaryotic ribosomal protein eS6 family.

The protein is Small ribosomal subunit protein eS6 of Pyrococcus abyssi (strain GE5 / Orsay).